Reading from the N-terminus, the 282-residue chain is Dihydropteroate synthase (282 aa).

The Pterin-binding domain occupies 15–267 (PHVMGILNVT…DVKETVEAMR (253 aa)). N22 serves as a coordination point for Mg(2+). Residues T62, D96, N115, D185, K221, and 255–257 (RVH) contribute to the (7,8-dihydropterin-6-yl)methyl diphosphate site.

Belongs to the DHPS family. Homodimer. The cofactor is Mg(2+).

The enzyme catalyses (7,8-dihydropterin-6-yl)methyl diphosphate + 4-aminobenzoate = 7,8-dihydropteroate + diphosphate. It participates in cofactor biosynthesis; tetrahydrofolate biosynthesis; 7,8-dihydrofolate from 2-amino-4-hydroxy-6-hydroxymethyl-7,8-dihydropteridine diphosphate and 4-aminobenzoate: step 1/2. Its function is as follows. Catalyzes the condensation of para-aminobenzoate (pABA) with 6-hydroxymethyl-7,8-dihydropterin diphosphate (DHPt-PP) to form 7,8-dihydropteroate (H2Pte), the immediate precursor of folate derivatives. This chain is Dihydropteroate synthase (folP), found in Shigella flexneri.